We begin with the raw amino-acid sequence, 72 residues long: Protein RALF-like 36 (72 aa).

A signal peptide spans 1–27 (MGISKKTVVQSFALIIIISIVMSTTEA). Disulfide bonds link cysteine 43–cysteine 51 and cysteine 63–cysteine 69.

This sequence belongs to the plant rapid alkalinization factor (RALF) family.

The protein resides in the secreted. Cell signaling peptide that may regulate plant stress, growth, and development. Mediates a rapid alkalinization of extracellular space by mediating a transient increase in the cytoplasmic Ca(2+) concentration leading to a calcium-dependent signaling events through a cell surface receptor and a concomitant activation of some intracellular mitogen-activated protein kinases. This Arabidopsis thaliana (Mouse-ear cress) protein is Protein RALF-like 36.